The sequence spans 130 residues: uncharacterized protein (130 aa).

Residues 1–28 form a disordered region; sequence MELAKERNGPHQKHHGQCQNHCTSPNTV. The span at 17-28 shows a compositional bias: polar residues; that stretch reads QCQNHCTSPNTV.

This is an uncharacterized protein from Saccharomyces cerevisiae (strain ATCC 204508 / S288c) (Baker's yeast).